Consider the following 314-residue polypeptide: Olfactory receptor 52H1 (314 aa).

The Extracellular portion of the chain corresponds to 1–32 (MIIFNLSSYNPGPFILVGIPGLEQFHVWIGIP). Residue asparagine 5 is glycosylated (N-linked (GlcNAc...) asparagine). A helical membrane pass occupies residues 33 to 53 (FCIIYIVAVVGNCILLYLIVV). Over 54–59 (EHSLHE) the chain is Cytoplasmic. Residues 60–80 (PMFFFLSMLAMTDLILSTAGV) traverse the membrane as a helical segment. Residues 81-101 (PKALSIFWLGAREITFPGCLT) lie on the Extracellular side of the membrane. A disulfide bond links cysteine 99 and cysteine 181. Residues 102–122 (QMFFLHYNFVLDSAILMAMAF) traverse the membrane as a helical segment. Residues 123 to 149 (DHYVAICSPLRYTTILTPKTIIKSAMG) are Cytoplasmic-facing. The helical transmembrane segment at 150-170 (ISFRSFCIILPDVFLLTCLPF) threads the bilayer. The Extracellular portion of the chain corresponds to 171–197 (CRTRIIPHTYCEHIGVAQLACADISIN). Residues 198–218 (FWYGFCVPIMTVISDVILIAV) traverse the membrane as a helical segment. The Cytoplasmic portion of the chain corresponds to 219–242 (SYAHILCAVFGLPSQDACQKALGT). A helical membrane pass occupies residues 243–263 (CGSHVCVILMFYTPAFFSILA). The Extracellular segment spans residues 264–275 (HRFGHNVSRTFH). An N-linked (GlcNAc...) asparagine glycan is attached at asparagine 269. Residues 276 to 296 (IMFANLYIVIPPALNPMVYGV) traverse the membrane as a helical segment. The Cytoplasmic segment spans residues 297–314 (KTKQIRDKVILLFSKGTG).

The protein belongs to the G-protein coupled receptor 1 family.

It localises to the membrane. Odorant receptor. In Homo sapiens (Human), this protein is Olfactory receptor 52H1 (OR52H1).